The primary structure comprises 94 residues: Protein RnfH (94 aa).

Belongs to the UPF0125 (RnfH) family.

In Yersinia pestis bv. Antiqua (strain Antiqua), this protein is Protein RnfH.